A 135-amino-acid chain; its full sequence is C-type lectin APL (135 aa).

4 cysteine pairs are disulfide-bonded: Cys-3–Cys-14, Cys-31–Cys-131, Cys-38–Cys-133, and Cys-106–Cys-123. Positions 10–132 (MNGLCYKIFD…CESKNAFLCQ (123 aa)) constitute a C-type lectin domain. Gln-96, Asp-98, Glu-104, Asn-119, and Asp-120 together coordinate Ca(2+). A Galactose-binding motif is present at residues 96 to 98 (QPD).

It belongs to the true venom lectin family. As to quaternary structure, homodimer; disulfide-linked. In terms of tissue distribution, expressed by the venom gland.

The protein resides in the secreted. Beta-galactoside lectin that agglutinates rabbit and human erythrocytes in a calcium-dependent fashion (MHC is 0.21 ug/ml on rabbit erythrocytes). Galactose (15 mM), lactose (20 mM), rhamnose (20 mM) and EGTA strongly inhibit this activity. In Agkistrodon piscivorus piscivorus (Eastern cottonmouth), this protein is C-type lectin APL.